A 284-amino-acid chain; its full sequence is Distal membrane arm assembly component 2 (284 aa).

Belongs to the ATP synthase subunit s family. Associates with mitochondrial complex I assembly intermediates during its biogenesis.

In terms of biological role, involved in the assembly of the mitochondrial membrane respiratory chain NADH dehydrogenase (Complex I). This is Distal membrane arm assembly component 2 from Drosophila melanogaster (Fruit fly).